The following is a 101-amino-acid chain: uncharacterized protein (101 aa).

A signal peptide spans 1–27 (MQLTGSIYPWFTAYALLKSTLMELINS). A run of 2 helical transmembrane segments spans residues 42–64 (LVPY…AISF) and 79–98 (TFVF…NTFL).

It localises to the cytoplasm. It is found in the nucleus membrane. This is an uncharacterized protein from Schizosaccharomyces pombe (strain 972 / ATCC 24843) (Fission yeast).